We begin with the raw amino-acid sequence, 524 residues long: uncharacterized protein (524 aa).

Residues 13–33 form a helical membrane-spanning segment; sequence EFILLILGMTVVGIVITMGLV.

The protein resides in the membrane. This is an uncharacterized protein from Methanocaldococcus jannaschii (strain ATCC 43067 / DSM 2661 / JAL-1 / JCM 10045 / NBRC 100440) (Methanococcus jannaschii).